A 714-amino-acid chain; its full sequence is Methylmalonyl-CoA mutase (714 aa).

The 131-residue stretch at 584-714 folds into the B12-binding domain; the sequence is RPRILIAKMG…VLNLISQHHD (131 aa). Histidine 597 contributes to the adenosylcob(III)alamin binding site.

The protein belongs to the methylmalonyl-CoA mutase family. In terms of assembly, homodimer. Interacts with ArgK. The cofactor is adenosylcob(III)alamin.

It catalyses the reaction (R)-methylmalonyl-CoA = succinyl-CoA. Catalyzes the interconversion of succinyl-CoA and methylmalonyl-CoA. Could be part of a pathway that converts succinate to propionate. The polypeptide is Methylmalonyl-CoA mutase (scpA) (Escherichia coli (strain K12)).